The primary structure comprises 197 residues: Inner membrane-spanning protein YciB (197 aa).

The next 5 helical transmembrane spans lie at 22-42 (IYSATAALIIMVLLNVFYHWF), 48-68 (PSMMWITLILVMLFGGATLIF), 76-96 (WKPSILQWVLASGFLASHLIG), 121-141 (AAWVLFLLFSGALNLYVAYTF), and 144-164 (EIWVSFKLFGLMGLTILFLIG).

The protein belongs to the YciB family.

It localises to the cell inner membrane. Its function is as follows. Plays a role in cell envelope biogenesis, maintenance of cell envelope integrity and membrane homeostasis. This Magnetococcus marinus (strain ATCC BAA-1437 / JCM 17883 / MC-1) protein is Inner membrane-spanning protein YciB.